A 111-amino-acid polypeptide reads, in one-letter code: Aquaporin-2 (111 aa).

Topologically, residues Ser1–Arg6 are cytoplasmic. The helical transmembrane segment at Ala7–Leu27 threads the bilayer. At Asn28–Thr37 the chain is on the extracellular side. A helical membrane pass occupies residues Val38 to Leu56. The Cytoplasmic segment spans residues Gly57 to Gly61. Positions Ala62–Ala71 form an intramembrane region, discontinuously helical. Residues Asn65–Ala67 carry the NPA 1 motif. The Cytoplasmic portion of the chain corresponds to Cys72–Arg82. Residues Ala83–Leu104 traverse the membrane as a helical segment. The Extracellular segment spans residues Thr105 to Gly111.

Belongs to the MIP/aquaporin (TC 1.A.8) family. In terms of assembly, homotetramer. In terms of processing, serine phosphorylation is necessary and sufficient for expression at the apical membrane. Endocytosis is not phosphorylation-dependent. Post-translationally, N-glycosylated.

The protein localises to the apical cell membrane. It is found in the basolateral cell membrane. Its subcellular location is the cell membrane. It localises to the cytoplasmic vesicle membrane. The protein resides in the golgi apparatus. The protein localises to the trans-Golgi network membrane. The catalysed reaction is H2O(in) = H2O(out). The enzyme catalyses glycerol(in) = glycerol(out). Its function is as follows. Forms a water-specific channel that provides the plasma membranes of renal collecting duct with high permeability to water, thereby permitting water to move in the direction of an osmotic gradient. Plays an essential role in renal water homeostasis. Could also be permeable to glycerol. The protein is Aquaporin-2 of Macroscelides proboscideus (Short-eared elephant shrew).